The sequence spans 399 residues: Elongation factor Tu 1 (399 aa).

One can recognise a tr-type G domain in the interval 17–208 (KPHVNVGTIG…LDDYVEVPPR (192 aa)). The tract at residues 26–33 (GHVDHGKT) is G1. 26 to 33 (GHVDHGKT) contacts GTP. A Mg(2+)-binding site is contributed by Thr33. The tract at residues 62-66 (GITIA) is G2. The G3 stretch occupies residues 83-86 (DCPG). GTP is bound by residues 83–87 (DCPGH) and 138–141 (NKAD). The segment at 138–141 (NKAD) is G4. The interval 175 to 177 (SAL) is G5.

Belongs to the TRAFAC class translation factor GTPase superfamily. Classic translation factor GTPase family. EF-Tu/EF-1A subfamily. As to quaternary structure, monomer.

It localises to the cytoplasm. It carries out the reaction GTP + H2O = GDP + phosphate + H(+). In terms of biological role, GTP hydrolase that promotes the GTP-dependent binding of aminoacyl-tRNA to the A-site of ribosomes during protein biosynthesis. This Wolbachia sp. subsp. Brugia malayi (strain TRS) protein is Elongation factor Tu 1.